Reading from the N-terminus, the 37-residue chain is Trypsin inhibitor 3 (37 aa).

3 cysteine pairs are disulfide-bonded: cysteine 4–cysteine 21, cysteine 11–cysteine 25, and cysteine 20–cysteine 36.

Its function is as follows. Trypsin inhibitor. In Spinacia oleracea (Spinach), this protein is Trypsin inhibitor 3.